The following is an 887-amino-acid chain: Alanine--tRNA ligase (887 aa).

Zn(2+) is bound by residues H581, H585, C683, and H687.

Belongs to the class-II aminoacyl-tRNA synthetase family. It depends on Zn(2+) as a cofactor.

It localises to the cytoplasm. It catalyses the reaction tRNA(Ala) + L-alanine + ATP = L-alanyl-tRNA(Ala) + AMP + diphosphate. Functionally, catalyzes the attachment of alanine to tRNA(Ala) in a two-step reaction: alanine is first activated by ATP to form Ala-AMP and then transferred to the acceptor end of tRNA(Ala). Also edits incorrectly charged Ser-tRNA(Ala) and Gly-tRNA(Ala) via its editing domain. The polypeptide is Alanine--tRNA ligase (Ehrlichia chaffeensis (strain ATCC CRL-10679 / Arkansas)).